The primary structure comprises 93 residues: Pyrimidine/purine nucleoside phosphorylase (93 aa).

It belongs to the nucleoside phosphorylase PpnP family.

It carries out the reaction a purine D-ribonucleoside + phosphate = a purine nucleobase + alpha-D-ribose 1-phosphate. The catalysed reaction is adenosine + phosphate = alpha-D-ribose 1-phosphate + adenine. It catalyses the reaction cytidine + phosphate = cytosine + alpha-D-ribose 1-phosphate. The enzyme catalyses guanosine + phosphate = alpha-D-ribose 1-phosphate + guanine. It carries out the reaction inosine + phosphate = alpha-D-ribose 1-phosphate + hypoxanthine. The catalysed reaction is thymidine + phosphate = 2-deoxy-alpha-D-ribose 1-phosphate + thymine. It catalyses the reaction uridine + phosphate = alpha-D-ribose 1-phosphate + uracil. The enzyme catalyses xanthosine + phosphate = alpha-D-ribose 1-phosphate + xanthine. In terms of biological role, catalyzes the phosphorolysis of diverse nucleosides, yielding D-ribose 1-phosphate and the respective free bases. Can use uridine, adenosine, guanosine, cytidine, thymidine, inosine and xanthosine as substrates. Also catalyzes the reverse reactions. The chain is Pyrimidine/purine nucleoside phosphorylase from Aliivibrio fischeri (strain ATCC 700601 / ES114) (Vibrio fischeri).